We begin with the raw amino-acid sequence, 55 residues long: U2-theraphotoxin-Cg1a (55 aa).

Residues 1-19 (DSPAWLKSMERIFQSEERE) constitute a propeptide that is removed on maturation. Disulfide bonds link cysteine 20-cysteine 34, cysteine 27-cysteine 39, and cysteine 33-cysteine 47.

Belongs to the neurotoxin 10 (Hwtx-1) family. 06 (F4b) subfamily. Expressed by the venom gland.

The protein resides in the secreted. Its function is as follows. Probable ion channel inhibitor. This chain is U2-theraphotoxin-Cg1a, found in Chilobrachys guangxiensis (Chinese earth tiger tarantula).